Consider the following 133-residue polypeptide: MSFVKEFREFAMRGNVVDMAVGVIIGGAFGKIVSSLVGDVVMPVLGILTGGVDFKDLSIVLKEAAGEVPAVTLNYGAFIQTVFDFVIIAFAIFLMIKALNKLKREEPKVEEPAEPKLSNEEVLLTEIRDLLKK.

A run of 2 helical transmembrane segments spans residues 10–30 (FAMR…GAFG) and 76–96 (GAFI…FLMI).

Belongs to the MscL family. As to quaternary structure, homopentamer.

The protein resides in the cell inner membrane. Its function is as follows. Channel that opens in response to stretch forces in the membrane lipid bilayer. May participate in the regulation of osmotic pressure changes within the cell. This chain is Large-conductance mechanosensitive channel, found in Pasteurella multocida (strain Pm70).